The following is a 538-amino-acid chain: UPF0761 membrane protein PsycPRwf_0630 (538 aa).

Transmembrane regions (helical) follow at residues 43–63 (LLSI…VPAL), 100–120 (LTAI…TTIE), 143–163 (WTII…SSAV), 183–203 (WVQV…YWFI), 215–235 (IAGV…GIIM), and 247–267 (AFAA…LILL). Positions 427–538 (SVFSAQDADA…IITEDDNPNK (112 aa)) are disordered. A compositionally biased stretch (low complexity) spans 482–493 (PPDADIKAAAAK). Residues 503–514 (KHTETAKQEHKK) are compositionally biased toward basic and acidic residues.

It belongs to the UPF0761 family.

The protein localises to the cell inner membrane. The sequence is that of UPF0761 membrane protein PsycPRwf_0630 from Psychrobacter sp. (strain PRwf-1).